The primary structure comprises 413 residues: NADH-quinone oxidoreductase subunit D (413 aa).

Belongs to the complex I 49 kDa subunit family. NDH-1 is composed of 14 different subunits. Subunits NuoB, C, D, E, F, and G constitute the peripheral sector of the complex.

It localises to the cell inner membrane. It catalyses the reaction a quinone + NADH + 5 H(+)(in) = a quinol + NAD(+) + 4 H(+)(out). NDH-1 shuttles electrons from NADH, via FMN and iron-sulfur (Fe-S) centers, to quinones in the respiratory chain. The immediate electron acceptor for the enzyme in this species is believed to be ubiquinone. Couples the redox reaction to proton translocation (for every two electrons transferred, four hydrogen ions are translocated across the cytoplasmic membrane), and thus conserves the redox energy in a proton gradient. In Rhodobacter capsulatus (Rhodopseudomonas capsulata), this protein is NADH-quinone oxidoreductase subunit D.